The chain runs to 80 residues: Toxin Acra1 (80 aa).

The N-terminal stretch at 1 to 22 (MMKLVLFSIIVILFSLIGSIHG) is a signal peptide. The LCN-type CS-alpha/beta domain occupies 25 to 80 (VPGNYPLDSSGNKYPCTVLGDNQSCIDVCKKHGVKYGYCYSFKCWCEFLEDKNVSI). Disulfide bonds link C40/C63, C49/C68, and C53/C70.

Expressed by the venom gland.

The protein localises to the secreted. Probable neurotoxin that inhibits ion channels. Is toxic to mice. Is about 2.8% of the total protein in the venom. This Androctonus crassicauda (Arabian fat-tailed scorpion) protein is Toxin Acra1.